The primary structure comprises 561 residues: Dihydroxy-acid dehydratase (561 aa).

A [2Fe-2S] cluster-binding site is contributed by C50. Residue D82 participates in Mg(2+) binding. A [2Fe-2S] cluster-binding site is contributed by C123. Residues D124 and K125 each contribute to the Mg(2+) site. K125 bears the N6-carboxylysine mark. Residue C195 participates in [2Fe-2S] cluster binding. E447 lines the Mg(2+) pocket. S473 (proton acceptor) is an active-site residue.

The protein belongs to the IlvD/Edd family. In terms of assembly, homodimer. [2Fe-2S] cluster is required as a cofactor. Mg(2+) serves as cofactor.

The catalysed reaction is (2R)-2,3-dihydroxy-3-methylbutanoate = 3-methyl-2-oxobutanoate + H2O. The enzyme catalyses (2R,3R)-2,3-dihydroxy-3-methylpentanoate = (S)-3-methyl-2-oxopentanoate + H2O. It participates in amino-acid biosynthesis; L-isoleucine biosynthesis; L-isoleucine from 2-oxobutanoate: step 3/4. It functions in the pathway amino-acid biosynthesis; L-valine biosynthesis; L-valine from pyruvate: step 3/4. Functionally, functions in the biosynthesis of branched-chain amino acids. Catalyzes the dehydration of (2R,3R)-2,3-dihydroxy-3-methylpentanoate (2,3-dihydroxy-3-methylvalerate) into 2-oxo-3-methylpentanoate (2-oxo-3-methylvalerate) and of (2R)-2,3-dihydroxy-3-methylbutanoate (2,3-dihydroxyisovalerate) into 2-oxo-3-methylbutanoate (2-oxoisovalerate), the penultimate precursor to L-isoleucine and L-valine, respectively. This is Dihydroxy-acid dehydratase from Trichodesmium erythraeum (strain IMS101).